The primary structure comprises 228 residues: Auxin-responsive protein IAA14 (228 aa).

The EAR-like (transcriptional repression) motif lies at 8-12 (LCLGL). The region spanning 110–210 (VAFVKVSMDG…SCKRLRIMKG (101 aa)) is the PB1 domain.

This sequence belongs to the Aux/IAA family. As to quaternary structure, homodimers and heterodimers. Interacts with TPL. In terms of tissue distribution, preferentially expressed in roots and flowers.

The protein resides in the nucleus. Functionally, aux/IAA proteins are short-lived transcriptional factors that function as repressors of early auxin response genes at low auxin concentrations. Repression is thought to result from the interaction with auxin response factors (ARFs), proteins that bind to the auxin-responsive promoter element (AuxRE). Formation of heterodimers with ARF proteins may alter their ability to modulate early auxin response genes expression. The sequence is that of Auxin-responsive protein IAA14 (IAA14) from Arabidopsis thaliana (Mouse-ear cress).